The following is a 303-amino-acid chain: UDP-N-acetylenolpyruvoylglucosamine reductase (303 aa).

The region spanning 30–196 (IGGPADLLII…LEAVFKLKQD (167 aa)) is the FAD-binding PCMH-type domain. The active site involves Arg-174. Residue Ser-225 is the Proton donor of the active site. Glu-295 is an active-site residue.

Belongs to the MurB family. FAD serves as cofactor.

It localises to the cytoplasm. It catalyses the reaction UDP-N-acetyl-alpha-D-muramate + NADP(+) = UDP-N-acetyl-3-O-(1-carboxyvinyl)-alpha-D-glucosamine + NADPH + H(+). Its pathway is cell wall biogenesis; peptidoglycan biosynthesis. In terms of biological role, cell wall formation. This chain is UDP-N-acetylenolpyruvoylglucosamine reductase, found in Bacillus pumilus (strain SAFR-032).